A 315-amino-acid polypeptide reads, in one-letter code: L-lactate dehydrogenase (315 aa).

NAD(+)-binding positions include valine 17, aspartate 38, lysine 43, tyrosine 69, and 83–84 (GA). Substrate contacts are provided by glutamine 86 and arginine 92. NAD(+) is bound by residues serine 105, 122–124 (ATN), and serine 147. 124 to 127 (NPVD) lines the substrate pocket. 152-155 (DTAR) lines the substrate pocket. Beta-D-fructose 1,6-bisphosphate-binding residues include arginine 157 and histidine 172. Catalysis depends on histidine 179, which acts as the Proton acceptor. A Phosphotyrosine modification is found at tyrosine 223. Residue threonine 232 coordinates substrate.

The protein belongs to the LDH/MDH superfamily. LDH family. Homotetramer.

Its subcellular location is the cytoplasm. The catalysed reaction is (S)-lactate + NAD(+) = pyruvate + NADH + H(+). It functions in the pathway fermentation; pyruvate fermentation to lactate; (S)-lactate from pyruvate: step 1/1. Its activity is regulated as follows. Allosterically activated by fructose 1,6-bisphosphate (FBP). In terms of biological role, catalyzes the conversion of lactate to pyruvate. The polypeptide is L-lactate dehydrogenase (Macrococcus caseolyticus (strain JCSC5402) (Macrococcoides caseolyticum)).